The chain runs to 324 residues: MSARNAASARTVACLLGPTASGKTAAALALAARRPIEIVSVDSALVYRGMDIGTAKPTRDERAAVPHHLIDIVDPADAYSAAEFRADALRLVAQIAARGRTPLLAGGTMLYYRALTQGLNDLPAADPDVRATLDADAARDGWPALHARLAGIDPATAARLAPNDSQRIQRALEVYLLTGQPMSALLAAPPRDDDAAAGLRFVPVALEPSERAVLHARIAARFDAMLEAGFIDEVERLRRRDDLHLGLPSMRCVGYRQAWEYLDGCTDYRTMRDKGIFATRQLCKRQLTWLRAMPERIVVDCCAPDATVRAVDALERVLDGRAPA.

Residue 17–24 participates in ATP binding; sequence GPTASGKT. 19-24 is a binding site for substrate; the sequence is TASGKT. 3 interaction with substrate tRNA regions span residues 42 to 45, 166 to 170, and 251 to 256; these read DSAL, QRIQR, and RCVGYR.

It belongs to the IPP transferase family. Monomer. It depends on Mg(2+) as a cofactor.

It carries out the reaction adenosine(37) in tRNA + dimethylallyl diphosphate = N(6)-dimethylallyladenosine(37) in tRNA + diphosphate. Its function is as follows. Catalyzes the transfer of a dimethylallyl group onto the adenine at position 37 in tRNAs that read codons beginning with uridine, leading to the formation of N6-(dimethylallyl)adenosine (i(6)A). The protein is tRNA dimethylallyltransferase of Burkholderia pseudomallei (strain 668).